Reading from the N-terminus, the 776-residue chain is Ribosomal biogenesis protein LAS1L (776 aa).

The segment covering 185 to 227 has biased composition (acidic residues); the sequence is DEDQLDAEDPEEEEREIIADDVLEEIPEPQDDDKDEELAVEDD. The segment at 185–247 is disordered; it reads DEDQLDAEDP…SHPEPSSRHK (63 aa). The span at 228–247 shows a compositional bias: basic and acidic residues; that stretch reads ANTKGNEEVASHPEPSSRHK. 2 positions are modified to phosphoserine: Ser-425 and Ser-509. The interval 501–646 is disordered; the sequence is KAIEGSSSSS…DYDDDEEEDR (146 aa). A compositionally biased stretch (basic and acidic residues) spans 544 to 557; it reads GNLKDVKQEEKKEN. Acidic residues-rich tracts occupy residues 558 to 602 and 611 to 646; these read EEEE…EEEE and MEAD…EEDR. A Phosphoserine modification is found at Ser-658. Positions 677–696 are interaction with NOL9; it reads SAWQVSSEDVRWGTFPLGRL. Residues 733–759 form a disordered region; it reads SSTLSLCCGGSNTNSSSSSSSGNMEGL. Low complexity predominate over residues 741–755; sequence GGSNTNSSSSSSSGN.

Belongs to the LAS1 family. As to quaternary structure, component of some MLL1/MLL complex, at least composed of the core components KMT2A/MLL1, ASH2L, HCFC1/HCF1, WDR5 and RBBP5, as well as the facultative components BACC1, CHD8, E2F6, HSP70, INO80C, KANSL1, LAS1L, MAX, MCRS1, MGA, MYST1/MOF, PELP1, PHF20, PRP31, RING2, RUVB1/TIP49A, RUVB2/TIP49B, SENP3, TAF1, TAF4, TAF6, TAF7, TAF9 and TEX10. Component of the 5FMC complex, at least composed of PELP1, LAS1L, TEX10, WDR18 and SENP3; the complex interacts with methylated CHTOP and ZNF148. Interacts with NOL9 to form an ITS2 pre-rRNA endonuclease-kinase complex.

It is found in the nucleus. It localises to the nucleolus. The protein localises to the nucleoplasm. The protein resides in the cytoplasm. In terms of biological role, required for the synthesis of the 60S ribosomal subunit and maturation of the 28S rRNA. Functions as a component of the Five Friends of Methylated CHTOP (5FMC) complex; the 5FMC complex is recruited to ZNF148 by methylated CHTOP, leading to desumoylation of ZNF148 and subsequent transactivation of ZNF148 target genes. Required for the efficient pre-rRNA processing at both ends of internal transcribed spacer 2 (ITS2). The sequence is that of Ribosomal biogenesis protein LAS1L (Las1l) from Mus musculus (Mouse).